Here is a 296-residue protein sequence, read N- to C-terminus: Ribosomal RNA small subunit methyltransferase A (296 aa).

S-adenosyl-L-methionine is bound by residues asparagine 28, leucine 30, glycine 55, glutamate 77, aspartate 103, and asparagine 122.

Belongs to the class I-like SAM-binding methyltransferase superfamily. rRNA adenine N(6)-methyltransferase family. RsmA subfamily.

Its subcellular location is the cytoplasm. The enzyme catalyses adenosine(1518)/adenosine(1519) in 16S rRNA + 4 S-adenosyl-L-methionine = N(6)-dimethyladenosine(1518)/N(6)-dimethyladenosine(1519) in 16S rRNA + 4 S-adenosyl-L-homocysteine + 4 H(+). Specifically dimethylates two adjacent adenosines (A1518 and A1519) in the loop of a conserved hairpin near the 3'-end of 16S rRNA in the 30S particle. May play a critical role in biogenesis of 30S subunits. The sequence is that of Ribosomal RNA small subunit methyltransferase A from Sinorhizobium fredii (strain NBRC 101917 / NGR234).